Reading from the N-terminus, the 310-residue chain is 2-dehydropantoate 2-reductase (310 aa).

NADP(+) is bound by residues 9-14 (GVGAIG) and Asn100. Residue Asn100 participates in substrate binding. The active-site Proton donor is Lys184. Residues Asn188, Asn192, and Ser259 each contribute to the substrate site. Position 270 (Glu270) interacts with NADP(+).

Belongs to the ketopantoate reductase family.

The protein resides in the cytoplasm. The catalysed reaction is (R)-pantoate + NADP(+) = 2-dehydropantoate + NADPH + H(+). The protein operates within cofactor biosynthesis; (R)-pantothenate biosynthesis; (R)-pantoate from 3-methyl-2-oxobutanoate: step 2/2. Functionally, catalyzes the NADPH-dependent reduction of ketopantoate into pantoic acid. The chain is 2-dehydropantoate 2-reductase from Aquifex aeolicus (strain VF5).